A 383-amino-acid polypeptide reads, in one-letter code: Ceramide synthase 3 (383 aa).

The chain crosses the membrane as a helical span at residues 32 to 52 (VFVKPSHLYVTIPYAFLLLII). The segment at 66–127 (KSFGIKETVR…RSRRNQERPS (62 aa)) is homeobox-like. In terms of domain architecture, TLC spans 130-331 (KKFQEACWRF…ILKMLNRCIF (202 aa)). The next 5 helical transmembrane spans lie at 139–159 (FAFY…KPWL), 174–194 (LLPS…SLLF), 205–225 (FLAH…SWCA), 264–284 (FFIF…FWIL), and 298–318 (FFSY…HLYW). Over 319-383 (GYYILKMLNR…HLIPNGQHGH (65 aa)) the chain is Cytoplasmic. Residue Ser-340 is modified to Phosphoserine. Residues 342-355 (DEDYEEEEEEEEEE) are compositionally biased toward acidic residues. The interval 342-363 (DEDYEEEEEEEEEEATKGKEMD) is disordered.

As to expression, expressed in the epidermis, where it localizes at the interface between the stratum granulosum and the stratum corneum (at protein level).

Its subcellular location is the endoplasmic reticulum membrane. The catalysed reaction is a very long-chain fatty acyl-CoA + a sphingoid base = an N-(very-long-chain fatty acyl)-sphingoid base + CoA + H(+). It carries out the reaction docosanoyl-CoA + sphinganine = N-docosanoylsphinganine + CoA + H(+). The enzyme catalyses tetracosanoyl-CoA + sphinganine = N-tetracosanoylsphinganine + CoA + H(+). It catalyses the reaction hexacosanoyl-CoA + sphinganine = N-hexacosanoylsphinganine + CoA + H(+). The catalysed reaction is 2-hydroxydocosanoyl-CoA + sphinganine = N-(2-hydroxydocosanoyl)-sphinganine + CoA + H(+). It carries out the reaction 2-hydroxytetracosanoyl-CoA + sphinganine = N-(2-hydroxytetracosanoyl)-sphinganine + CoA + H(+). The enzyme catalyses an ultra-long-chain fatty acyl-CoA + a sphingoid base = an N-(ultra-long-chain-acyl)-sphingoid base + CoA + H(+). It catalyses the reaction octacosanoyl-CoA + sphinganine = N-(octacosanoyl)-sphinganine + CoA + H(+). The catalysed reaction is a fatty acyl-CoA + sphing-4-enine = an N-acylsphing-4-enine + CoA + H(+). It carries out the reaction sphinganine + octadecanoyl-CoA = N-(octadecanoyl)-sphinganine + CoA + H(+). The enzyme catalyses 2-hydroxyoctadecanoyl-CoA + sphinganine = N-(2-hydroxyoctadecanoyl)-sphinganine + CoA + H(+). Its pathway is lipid metabolism; sphingolipid metabolism. Its function is as follows. Ceramide synthase that catalyzes the transfer of the acyl chain from acyl-CoA to a sphingoid base, with high selectivity toward very- and ultra-long-chain fatty acyl-CoA (chain length greater than C22). N-acylates sphinganine and sphingosine bases to form dihydroceramides and ceramides in de novo synthesis and salvage pathways, respectively. It is crucial for the synthesis of ultra-long-chain ceramides in the epidermis, to maintain epidermal lipid homeostasis and terminal differentiation. This chain is Ceramide synthase 3, found in Homo sapiens (Human).